A 499-amino-acid chain; its full sequence is Glycerol kinase (499 aa).

An ADP-binding site is contributed by T17. Positions 17, 18, and 19 each coordinate ATP. A sn-glycerol 3-phosphate-binding site is contributed by T17. R21 lines the ADP pocket. R87, E88, Y139, and D243 together coordinate sn-glycerol 3-phosphate. Glycerol-binding residues include R87, E88, Y139, D243, and Q244. ADP is bound by residues T265 and G308. Residues T265, G308, Q312, and G409 each contribute to the ATP site. Positions 409 and 413 each coordinate ADP.

This sequence belongs to the FGGY kinase family.

The catalysed reaction is glycerol + ATP = sn-glycerol 3-phosphate + ADP + H(+). Its pathway is polyol metabolism; glycerol degradation via glycerol kinase pathway; sn-glycerol 3-phosphate from glycerol: step 1/1. Inhibited by fructose 1,6-bisphosphate (FBP). Functionally, key enzyme in the regulation of glycerol uptake and metabolism. Catalyzes the phosphorylation of glycerol to yield sn-glycerol 3-phosphate. This Pseudomonas putida (strain ATCC 700007 / DSM 6899 / JCM 31910 / BCRC 17059 / LMG 24140 / F1) protein is Glycerol kinase.